Here is a 307-residue protein sequence, read N- to C-terminus: Elongation factor Ts (307 aa).

Positions 80–83 (TDFV) are involved in Mg(2+) ion dislocation from EF-Tu.

Belongs to the EF-Ts family.

The protein resides in the cytoplasm. Functionally, associates with the EF-Tu.GDP complex and induces the exchange of GDP to GTP. It remains bound to the aminoacyl-tRNA.EF-Tu.GTP complex up to the GTP hydrolysis stage on the ribosome. The protein is Elongation factor Ts of Methylobacterium sp. (strain 4-46).